The primary structure comprises 344 residues: tRNA N6-adenosine threonylcarbamoyltransferase (344 aa).

Fe cation is bound by residues His-111 and His-115. Substrate-binding positions include 133–137 (LVSGG), Asp-166, Gly-179, and Asn-283. Fe cation is bound at residue Asp-311.

It belongs to the KAE1 / TsaD family. Fe(2+) serves as cofactor.

It localises to the cytoplasm. The catalysed reaction is L-threonylcarbamoyladenylate + adenosine(37) in tRNA = N(6)-L-threonylcarbamoyladenosine(37) in tRNA + AMP + H(+). In terms of biological role, required for the formation of a threonylcarbamoyl group on adenosine at position 37 (t(6)A37) in tRNAs that read codons beginning with adenine. Is involved in the transfer of the threonylcarbamoyl moiety of threonylcarbamoyl-AMP (TC-AMP) to the N6 group of A37, together with TsaE and TsaB. TsaD likely plays a direct catalytic role in this reaction. The polypeptide is tRNA N6-adenosine threonylcarbamoyltransferase (Orientia tsutsugamushi (strain Boryong) (Rickettsia tsutsugamushi)).